Reading from the N-terminus, the 304-residue chain is Protein INO2 (304 aa).

Positions 236 to 290 (VRKWKHVQMEKIRRINTKEAFERLIKSVRTPPKENGKRIPKHILLTCVMNDIKSI) constitute a bHLH domain.

In terms of assembly, efficient DNA binding requires dimerization with another bHLH protein.

The protein resides in the nucleus. Its function is as follows. Positive regulatory factor required for depression of the coregulated phospholipid biosynthetic enzymes. Also involved in the expression of ITR1. This is Protein INO2 (INO2) from Saccharomyces cerevisiae (strain ATCC 204508 / S288c) (Baker's yeast).